Here is a 469-residue protein sequence, read N- to C-terminus: Soluble pyridine nucleotide transhydrogenase (469 aa).

39 to 48 (ERENSVGGGC) contacts FAD.

Belongs to the class-I pyridine nucleotide-disulfide oxidoreductase family. FAD is required as a cofactor.

It localises to the cytoplasm. The catalysed reaction is NAD(+) + NADPH = NADH + NADP(+). Functionally, conversion of NADPH, generated by peripheral catabolic pathways, to NADH, which can enter the respiratory chain for energy generation. The protein is Soluble pyridine nucleotide transhydrogenase of Photobacterium profundum (strain SS9).